The primary structure comprises 754 residues: 5-methyltetrahydropteroyltriglutamate--homocysteine methyltransferase (754 aa).

Residues 17–20 (RELK) and Lys117 contribute to the 5-methyltetrahydropteroyltri-L-glutamate site. L-homocysteine-binding positions include 431 to 433 (IGS) and Glu484. L-methionine-binding positions include 431 to 433 (IGS) and Glu484. 5-methyltetrahydropteroyltri-L-glutamate contacts are provided by residues 515–516 (RC) and Trp561. Asp599 contributes to the L-homocysteine binding site. Residue Asp599 participates in L-methionine binding. Glu605 contacts 5-methyltetrahydropteroyltri-L-glutamate. Zn(2+) is bound by residues His641, Cys643, and Glu665. The Proton donor role is filled by His694. A Zn(2+)-binding site is contributed by Cys726.

This sequence belongs to the vitamin-B12 independent methionine synthase family. Zn(2+) is required as a cofactor.

The catalysed reaction is 5-methyltetrahydropteroyltri-L-glutamate + L-homocysteine = tetrahydropteroyltri-L-glutamate + L-methionine. It functions in the pathway amino-acid biosynthesis; L-methionine biosynthesis via de novo pathway; L-methionine from L-homocysteine (MetE route): step 1/1. Functionally, catalyzes the transfer of a methyl group from 5-methyltetrahydrofolate to homocysteine resulting in methionine formation. The sequence is that of 5-methyltetrahydropteroyltriglutamate--homocysteine methyltransferase from Salmonella enteritidis PT4 (strain P125109).